Consider the following 232-residue polypeptide: N-acetyltransferase 8B (232 aa).

Topologically, residues 1–62 are cytoplasmic; sequence MPRFEAQKSS…FLLLLGVPLA (62 aa). The chain crosses the membrane as a helical; Signal-anchor for type II membrane protein span at residues 63-83; that stretch reads LVLVSGSWILAVICIFFLLLL. The 146-residue stretch at 79–224 folds into the N-acetyltransferase domain; the sequence is FLLLLLRLLA…WRLVDICFIQ (146 aa). The Lumenal portion of the chain corresponds to 84-232; that stretch reads LRLLARQPWK…IQLNYSFPSA (149 aa). Lys109 is modified (N6-acetyllysine).

The protein belongs to the NAT8 family. Acetylation on Lys-109 modulates enzymatic activity. In terms of tissue distribution, expressed in brain (at protein level).

It localises to the endoplasmic reticulum-Golgi intermediate compartment membrane. The protein localises to the endoplasmic reticulum membrane. The enzyme catalyses L-lysyl-[protein] + acetyl-CoA = N(6)-acetyl-L-lysyl-[protein] + CoA + H(+). In terms of biological role, endoplasmic reticulum (ER)-membrane-bound lysine N-acetyltransferase catalyzing the N6-acetylation of lysine residues in the lumen of the ER in various proteins, including PROM1 and BACE1, using acetyl-CoA as acetyl donor. Thereby, may regulate apoptosis through the acetylation and the regulation of the expression of PROM1. Acetylates and stabilizes BACE1 immature protein, leading to increased steady-state levels in neurons. By acting on BACE1 expression, may regulate amyloid beta-peptide formation. N(6)-lysine acetylation in ER maintains protein homeostasis and regulates reticulophagy. This chain is N-acetyltransferase 8B, found in Mus musculus (Mouse).